The primary structure comprises 341 residues: L-threonine 3-dehydrogenase (341 aa).

C38 is a Zn(2+) binding site. Active-site charge relay system residues include T40 and H43. Residues H63, E64, C93, C96, C99, and C107 each coordinate Zn(2+). NAD(+) contacts are provided by residues I175, D195, R200, 262-264 (LGI), and 286-287 (IY).

This sequence belongs to the zinc-containing alcohol dehydrogenase family. In terms of assembly, homotetramer. Zn(2+) serves as cofactor.

The protein resides in the cytoplasm. It catalyses the reaction L-threonine + NAD(+) = (2S)-2-amino-3-oxobutanoate + NADH + H(+). Its pathway is amino-acid degradation; L-threonine degradation via oxydo-reductase pathway; glycine from L-threonine: step 1/2. Functionally, catalyzes the NAD(+)-dependent oxidation of L-threonine to 2-amino-3-ketobutyrate. In Shewanella sp. (strain W3-18-1), this protein is L-threonine 3-dehydrogenase.